A 242-amino-acid chain; its full sequence is Ribonuclease PH (242 aa).

Phosphate contacts are provided by residues arginine 89 and 127 to 129 (GTR).

Belongs to the RNase PH family. In terms of assembly, homohexameric ring arranged as a trimer of dimers.

The catalysed reaction is tRNA(n+1) + phosphate = tRNA(n) + a ribonucleoside 5'-diphosphate. In terms of biological role, phosphorolytic 3'-5' exoribonuclease that plays an important role in tRNA 3'-end maturation. Removes nucleotide residues following the 3'-CCA terminus of tRNAs; can also add nucleotides to the ends of RNA molecules by using nucleoside diphosphates as substrates, but this may not be physiologically important. Probably plays a role in initiation of 16S rRNA degradation (leading to ribosome degradation) during starvation. The chain is Ribonuclease PH from Neisseria gonorrhoeae (strain ATCC 700825 / FA 1090).